Here is a 407-residue protein sequence, read N- to C-terminus: Chorismate synthase (407 aa).

Positions 40 and 46 each coordinate NADP(+). FMN contacts are provided by residues 140-142 (RSS), 261-262 (QA), glycine 305, 320-324 (KPIST), and arginine 346.

The protein belongs to the chorismate synthase family. In terms of assembly, homotetramer. The cofactor is FMNH2.

It carries out the reaction 5-O-(1-carboxyvinyl)-3-phosphoshikimate = chorismate + phosphate. It participates in metabolic intermediate biosynthesis; chorismate biosynthesis; chorismate from D-erythrose 4-phosphate and phosphoenolpyruvate: step 7/7. In terms of biological role, catalyzes the anti-1,4-elimination of the C-3 phosphate and the C-6 proR hydrogen from 5-enolpyruvylshikimate-3-phosphate (EPSP) to yield chorismate, which is the branch point compound that serves as the starting substrate for the three terminal pathways of aromatic amino acid biosynthesis. This reaction introduces a second double bond into the aromatic ring system. The chain is Chorismate synthase from Corynebacterium glutamicum (strain R).